Consider the following 125-residue polypeptide: 14 kDa phosphohistidine phosphatase (125 aa).

A2 is subject to N-acetylalanine. Residue K21 coordinates substrate. The active-site Proton acceptor is the H53. 94-96 (SMA) contributes to the substrate binding site.

It belongs to the janus family. Monomer. Expressed abundantly in heart and skeletal muscle.

The protein resides in the cytoplasm. The catalysed reaction is N(pros)-phospho-L-histidyl-[protein] + H2O = L-histidyl-[protein] + phosphate. The enzyme catalyses N(tele)-phospho-L-histidyl-[protein] + H2O = L-histidyl-[protein] + phosphate. Exhibits phosphohistidine phosphatase activity. The polypeptide is 14 kDa phosphohistidine phosphatase (PHPT1) (Homo sapiens (Human)).